The primary structure comprises 321 residues: Phosphate acyltransferase (321 aa).

Belongs to the PlsX family. As to quaternary structure, homodimer. Probably interacts with PlsY.

It is found in the cytoplasm. The enzyme catalyses a fatty acyl-[ACP] + phosphate = an acyl phosphate + holo-[ACP]. Its pathway is lipid metabolism; phospholipid metabolism. Functionally, catalyzes the reversible formation of acyl-phosphate (acyl-PO(4)) from acyl-[acyl-carrier-protein] (acyl-ACP). This enzyme utilizes acyl-ACP as fatty acyl donor, but not acyl-CoA. This chain is Phosphate acyltransferase, found in Chlamydia trachomatis serovar L2 (strain ATCC VR-902B / DSM 19102 / 434/Bu).